The sequence spans 743 residues: ABC-type transporter claG (743 aa).

Asparagine 4 and asparagine 30 each carry an N-linked (GlcNAc...) asparagine glycan. The helical transmembrane segment at 124 to 144 (SILLDIFLVIVVSWPFPFAWI) threads the bilayer. Asparagine 159 is a glycosylation site (N-linked (GlcNAc...) asparagine). In terms of domain architecture, ABC transporter spans 200–439 (VEFSGISMRP…FQDAGYTFPL (240 aa)). Residue 234-241 (GPSGSGKS) participates in ATP binding. 5 consecutive transmembrane segments (helical) span residues 507-527 (YPSFVLEILTGAGCGILIGLS), 560-580 (GMLLCLTIGCAAGPAGVKTFG), 611-631 (IFLSALHFTSFYLILTTPIVS), 636-656 (LIVNLLYFYCIYGAASMISAI), and 661-681 (NGPLITMLTSVLFCALSGCAP).

This sequence belongs to the ABC transporter superfamily. ABCG family.

It is found in the membrane. ABC-type transporter; part of the cla gene cluster that produces clavatol and ortho-quinone methide. The clavatol biosynthesis cluster cla and the terrestric acid cluster tra are both involved in the production of peniphenones and penilactones. In Penicillium crustosum (Blue mold fungus), this protein is ABC-type transporter claG.